The following is a 387-amino-acid chain: MLHTTPSGLLIIDKPQGVTSFDAVAAVRGALHIKKVGHAGTLDPMATGTLVIAFGHATRLLNAIVAHDKTYEATIRLGLRTTTDDAEGEVLVDGEARSRWQTLSAQLTEGGQSGEPTALPTASWQDLLTRTIATNFTGDIEQVPNTFSAIKINGQRAYDLAREGKDVELKPRPVTISEFTVLDIRSGFVAGEQAAEPLREDANTGAIPALDVDVRISCSSGTYIRALARDLGKELGVGGYLTRLRRTRVGRFALPDDASGLIAPEAMLDTRTHTVTAHTDQKTFTNREGQTVTRNKCVLDTPEGLAGDERRNWLLDHALTMEQAARGAMPALDITPEEASELRFGRRIERTISEPTAAIVPQTHDVAAIIERANAHQAKPVTVFPLA.

The Nucleophile role is filled by Asp-43.

It belongs to the pseudouridine synthase TruB family. Type 1 subfamily.

It carries out the reaction uridine(55) in tRNA = pseudouridine(55) in tRNA. Functionally, responsible for synthesis of pseudouridine from uracil-55 in the psi GC loop of transfer RNAs. The chain is tRNA pseudouridine synthase B from Bifidobacterium longum (strain NCC 2705).